A 266-amino-acid chain; its full sequence is Small ribosomal subunit protein uS2 (266 aa).

Residues 227–266 (GVSFTEETPSEPIQSDSSEEEEGSLDISDLFEDTDLKEEE) are disordered. The span at 231–240 (TEETPSEPIQ) shows a compositional bias: polar residues. The segment covering 243–266 (SSEEEEGSLDISDLFEDTDLKEEE) has biased composition (acidic residues).

This sequence belongs to the universal ribosomal protein uS2 family.

This chain is Small ribosomal subunit protein uS2, found in Pseudothermotoga lettingae (strain ATCC BAA-301 / DSM 14385 / NBRC 107922 / TMO) (Thermotoga lettingae).